Reading from the N-terminus, the 453-residue chain is Jacalin-related lectin 40 (453 aa).

Jacalin-type lectin domains follow at residues 1–142 (MAQK…YFTT), 154–296 (HIKL…YFSS), and 306–449 (PEKL…YVVP). Alanine 2 bears the N-acetylalanine mark.

It belongs to the jacalin lectin family. In terms of tissue distribution, expressed in roots.

The chain is Jacalin-related lectin 40 (JAL40) from Arabidopsis thaliana (Mouse-ear cress).